A 417-amino-acid chain; its full sequence is Synaptic vesicle membrane protein VAT-1 homolog-like (417 aa).

Disordered stretches follow at residues 1 to 33 and 382 to 417; these read MAKE…GSHR and PTPL…PFIQ. Residue S390 is modified to Phosphoserine. Phosphothreonine is present on residues T391 and T393. Position 394 is a phosphoserine (S394). Over residues 395-405 the composition is skewed to acidic residues; it reads EAGEEEEDHEG. Residues 406 to 417 show a composition bias toward basic and acidic residues; that stretch reads DSENKERMPFIQ.

The protein belongs to the zinc-containing alcohol dehydrogenase family. Quinone oxidoreductase subfamily.

In Mus musculus (Mouse), this protein is Synaptic vesicle membrane protein VAT-1 homolog-like (Vat1l).